The sequence spans 137 residues: SPbeta prophage-derived disulfide bond formation protein A (137 aa).

Positions 1 to 25 are cleaved as a signal peptide; sequence MKKWIVLFLVLIAAAISIFVYVSTG. The 111-residue stretch at 26–136 folds into the Thioredoxin domain; the sequence is SEKPFYNDIN…IEKFFDKNGD (111 aa). A disulfide bridge connects residues C58 and C61.

Belongs to the thioredoxin family.

It localises to the secreted. Functionally, unknown; dispensable for production of the lantibiotic sublancin 168 and for competence for DNA uptake. The polypeptide is SPbeta prophage-derived disulfide bond formation protein A (bdbA) (Bacillus subtilis (strain 168)).